Consider the following 254-residue polypeptide: Rho-related protein racD (254 aa).

Residue 15 to 22 (GDGAVGKT) participates in GTP binding. An Effector region motif is present at residues 37-45 (YVPTVFDNF). GTP is bound by residues 62-66 (DTAGQ) and 120-123 (TKTD). Residues 186-231 (AVTSPTSKSSGKSSPSSTSSKPSKTTTTTTTSSSSSSPPAASTAKP) are compositionally biased toward low complexity. Positions 186–254 (AVTSPTSKSS…KDKDEKKPAK (69 aa)) are disordered. A compositionally biased stretch (basic and acidic residues) spans 232-254 (AGEKKLSWGLFRKKDKDEKKPAK).

It belongs to the small GTPase superfamily. Rho family.

This is Rho-related protein racD (racD) from Dictyostelium discoideum (Social amoeba).